We begin with the raw amino-acid sequence, 197 residues long: UPF0301 protein Adeh_3962 (197 aa).

Belongs to the UPF0301 (AlgH) family.

In Anaeromyxobacter dehalogenans (strain 2CP-C), this protein is UPF0301 protein Adeh_3962.